Reading from the N-terminus, the 183-residue chain is Ribosome-recycling factor (183 aa).

The tract at residues Asp-134–Asp-156 is disordered.

It belongs to the RRF family.

It is found in the cytoplasm. Functionally, responsible for the release of ribosomes from messenger RNA at the termination of protein biosynthesis. May increase the efficiency of translation by recycling ribosomes from one round of translation to another. The sequence is that of Ribosome-recycling factor from Leptospira biflexa serovar Patoc (strain Patoc 1 / Ames).